Reading from the N-terminus, the 257-residue chain is DNA repair protein RecO (257 aa).

It belongs to the RecO family.

Its function is as follows. Involved in DNA repair and RecF pathway recombination. The protein is DNA repair protein RecO of Streptococcus thermophilus (strain CNRZ 1066).